The primary structure comprises 135 residues: Small ribosomal subunit protein bS16 (135 aa).

Residues 94 to 135 (IGTEMETWQQRNDSRLKRGLDRKAIRRKRKKEAEAKEKESAG) form a disordered region. Composition is skewed to basic and acidic residues over residues 105–116 (NDSRLKRGLDRK) and 124–135 (KEAEAKEKESAG).

The protein belongs to the bacterial ribosomal protein bS16 family.

The chain is Small ribosomal subunit protein bS16 from Chloroherpeton thalassium (strain ATCC 35110 / GB-78).